The following is a 475-amino-acid chain: Aspartyl/glutamyl-tRNA(Asn/Gln) amidotransferase subunit B (475 aa).

This sequence belongs to the GatB/GatE family. GatB subfamily. As to quaternary structure, heterotrimer of A, B and C subunits.

It catalyses the reaction L-glutamyl-tRNA(Gln) + L-glutamine + ATP + H2O = L-glutaminyl-tRNA(Gln) + L-glutamate + ADP + phosphate + H(+). The catalysed reaction is L-aspartyl-tRNA(Asn) + L-glutamine + ATP + H2O = L-asparaginyl-tRNA(Asn) + L-glutamate + ADP + phosphate + 2 H(+). Allows the formation of correctly charged Asn-tRNA(Asn) or Gln-tRNA(Gln) through the transamidation of misacylated Asp-tRNA(Asn) or Glu-tRNA(Gln) in organisms which lack either or both of asparaginyl-tRNA or glutaminyl-tRNA synthetases. The reaction takes place in the presence of glutamine and ATP through an activated phospho-Asp-tRNA(Asn) or phospho-Glu-tRNA(Gln). The sequence is that of Aspartyl/glutamyl-tRNA(Asn/Gln) amidotransferase subunit B from Chlorobium chlorochromatii (strain CaD3).